The sequence spans 334 residues: Holliday junction branch migration complex subunit RuvB (334 aa).

The interval 4–184 is large ATPase domain (RuvB-L); it reads ADRIISASPQ…FGIVQRLEFY (181 aa). ATP is bound by residues I23, R24, G65, K68, T69, T70, 131-133, R174, Y184, and R221; that span reads EDY. T69 lines the Mg(2+) pocket. The small ATPAse domain (RuvB-S) stretch occupies residues 185-255; it reads NVDDLTSIVK…IAKQALVMLD (71 aa). Positions 258-334 are head domain (RuvB-H); that stretch reads PQGFDFMDIK…YAHLGISLSE (77 aa). R294, R313, and R318 together coordinate DNA.

This sequence belongs to the RuvB family. Homohexamer. Forms an RuvA(8)-RuvB(12)-Holliday junction (HJ) complex. HJ DNA is sandwiched between 2 RuvA tetramers; dsDNA enters through RuvA and exits via RuvB. An RuvB hexamer assembles on each DNA strand where it exits the tetramer. Each RuvB hexamer is contacted by two RuvA subunits (via domain III) on 2 adjacent RuvB subunits; this complex drives branch migration. In the full resolvosome a probable DNA-RuvA(4)-RuvB(12)-RuvC(2) complex forms which resolves the HJ.

The protein localises to the cytoplasm. The catalysed reaction is ATP + H2O = ADP + phosphate + H(+). In terms of biological role, the RuvA-RuvB-RuvC complex processes Holliday junction (HJ) DNA during genetic recombination and DNA repair, while the RuvA-RuvB complex plays an important role in the rescue of blocked DNA replication forks via replication fork reversal (RFR). RuvA specifically binds to HJ cruciform DNA, conferring on it an open structure. The RuvB hexamer acts as an ATP-dependent pump, pulling dsDNA into and through the RuvAB complex. RuvB forms 2 homohexamers on either side of HJ DNA bound by 1 or 2 RuvA tetramers; 4 subunits per hexamer contact DNA at a time. Coordinated motions by a converter formed by DNA-disengaged RuvB subunits stimulates ATP hydrolysis and nucleotide exchange. Immobilization of the converter enables RuvB to convert the ATP-contained energy into a lever motion, pulling 2 nucleotides of DNA out of the RuvA tetramer per ATP hydrolyzed, thus driving DNA branch migration. The RuvB motors rotate together with the DNA substrate, which together with the progressing nucleotide cycle form the mechanistic basis for DNA recombination by continuous HJ branch migration. Branch migration allows RuvC to scan DNA until it finds its consensus sequence, where it cleaves and resolves cruciform DNA. The sequence is that of Holliday junction branch migration complex subunit RuvB from Haemophilus ducreyi (strain 35000HP / ATCC 700724).